The chain runs to 509 residues: tRNA (guanine(37)-N(1))-methyltransferase (509 aa).

Residues 1–57 (MVLWILWRPFGFSRRLLKLERHSITESKSLIPLAWTSLTQTLSESPGIFLLGQRKRF) constitute a mitochondrion transit peptide. S-adenosyl-L-methionine-binding positions include His-289, 327 to 328 (DL), 355 to 356 (DG), and Asn-387. Residues 478–509 (TKNPENHEDPPLKRQRTAEAFSDEKTQIASNT) are disordered.

Belongs to the class I-like SAM-binding methyltransferase superfamily. TRM5/TYW2 family. Monomer.

It localises to the mitochondrion matrix. The protein resides in the nucleus. It is found in the cytoplasm. It catalyses the reaction guanosine(37) in tRNA + S-adenosyl-L-methionine = N(1)-methylguanosine(37) in tRNA + S-adenosyl-L-homocysteine + H(+). In terms of biological role, involved in mitochondrial tRNA methylation. Specifically methylates the N1 position of guanosine-37 in various tRNAs. Methylation is not dependent on the nature of the nucleoside 5' of the target nucleoside. This is the first step in the biosynthesis of wybutosine (yW), a modified base adjacent to the anticodon of tRNAs and required for accurate decoding. The polypeptide is tRNA (guanine(37)-N(1))-methyltransferase (Macaca fascicularis (Crab-eating macaque)).